The following is a 328-amino-acid chain: tRNA uridine(34) hydroxylase (328 aa).

The 95-residue stretch at Leu130–Glu224 folds into the Rhodanese domain. Residue Cys184 is the Cysteine persulfide intermediate of the active site.

This sequence belongs to the TrhO family.

It carries out the reaction uridine(34) in tRNA + AH2 + O2 = 5-hydroxyuridine(34) in tRNA + A + H2O. Catalyzes oxygen-dependent 5-hydroxyuridine (ho5U) modification at position 34 in tRNAs. This is tRNA uridine(34) hydroxylase from Streptococcus pneumoniae (strain P1031).